Consider the following 130-residue polypeptide: Small ribosomal subunit protein uS8 (130 aa).

The protein belongs to the universal ribosomal protein uS8 family. In terms of assembly, part of the 30S ribosomal subunit. Contacts proteins S5 and S12.

Its function is as follows. One of the primary rRNA binding proteins, it binds directly to 16S rRNA central domain where it helps coordinate assembly of the platform of the 30S subunit. This is Small ribosomal subunit protein uS8 from Cronobacter sakazakii (strain ATCC BAA-894) (Enterobacter sakazakii).